A 68-amino-acid chain; its full sequence is Tau-scoloptoxin(04)-Ssm1b (68 aa).

The first 25 residues, 1–25, serve as a signal peptide directing secretion; the sequence is MLKSFCILSVFMVLFLAKFPDLCSG. The propeptide occupies 26–36; the sequence is EEISPLKIVVR. 2 disulfides stabilise this stretch: cysteine 45–cysteine 56 and cysteine 50–cysteine 63. Positions 55–67 are highly charged C-terminal region, binds to TRPV1 channel; that stretch reads RCSIVDKQCIKKE.

Belongs to the scoloptoxin-04 family. As to expression, expressed by the venom gland.

It is found in the secreted. In terms of biological role, extremely potent agonist and potentiator of TRPV1 (EC(50)=470-521.5 nM (mouse)). It strongly promotes the heat activation process by downshifting the activation threshold temperature. It preferably binds to the activated channel and promotes its opening. Holding the channel closed by cooling prevents binding of this toxin, leaving it ineffective. The toxin binds to the charge-rich outer pore region of the channel where it directly interacts with the pore helix and turret, two adjacent structural elements known to be critical for activation gating of TRPV1. In comparison with Sm1b, induces a TRPV1 desensitization with slower kinetics (20 seconds). In vivo, induces pain in mice after intraplantar injection. Functionally, potent agonist and probable potentiator of TRPV1 (EC(50)=38.35 uM (mouse)). Also binds to the outer pore region of TRPV1. In comparison with Sm1a, induces a TRPV1 desensitization with faster kinetics (2 seconds) and leads to a more complete TRPV1 desensitization. Desensitization is achieved by reducing both the open probability and the single-channel conductance upon prolonged exposure. The sequence is that of Tau-scoloptoxin(04)-Ssm1b from Scolopendra mutilans (Chinese red-headed centipede).